The sequence spans 942 residues: UvrABC system protein A (942 aa).

32–39 (GLSGSGKS) serves as a coordination point for ATP. A C4-type zinc finger spans residues 251–278 (CPVCGFTVPELEPRLFSFNAPFGSCPTC). ABC transporter domains lie at 308–589 (WNPI…KKSI) and 609–937 (GNGR…HYLK). 641-648 (GVSGSGKS) lines the ATP pocket. The C4-type zinc-finger motif lies at 740–766 (CEACSGDGIIKIEMHFLPDVYVPCEVC).

The protein belongs to the ABC transporter superfamily. UvrA family. As to quaternary structure, forms a heterotetramer with UvrB during the search for lesions.

Its subcellular location is the cytoplasm. Functionally, the UvrABC repair system catalyzes the recognition and processing of DNA lesions. UvrA is an ATPase and a DNA-binding protein. A damage recognition complex composed of 2 UvrA and 2 UvrB subunits scans DNA for abnormalities. When the presence of a lesion has been verified by UvrB, the UvrA molecules dissociate. The chain is UvrABC system protein A from Streptococcus pyogenes serotype M18 (strain MGAS8232).